Consider the following 218-residue polypeptide: Autophagy-related protein 101 (218 aa).

The segment at 152-156 (IINIV) is important for interaction with ATG13.

The protein belongs to the ATG101 family. In terms of assembly, interacts with ATG13. Associates with a complex composed of ATG13, ULK1 and RB1CC1; the association with this complex requires the presence of ATG13.

Its subcellular location is the cytoplasm. It is found in the preautophagosomal structure. In terms of biological role, autophagy factor required for autophagosome formation. Stabilizes ATG13, protecting it from proteasomal degradation. The protein is Autophagy-related protein 101 (ATG101) of Homo sapiens (Human).